A 410-amino-acid polypeptide reads, in one-letter code: Multidrug resistance protein MdtM (410 aa).

Over 1–11 the chain is Cytoplasmic; sequence MPRFFARHAAT. Residues 12–32 form a helical membrane-spanning segment; sequence LFFPMALILYDFAAYLSTDLI. Residues 33–48 are Periplasmic-facing; that stretch reads QPGIINVVRDFNADVS. Residues 49-69 traverse the membrane as a helical segment; the sequence is LAPAAVSLYLAGGMALQWLLG. Residues 70-78 are Cytoplasmic-facing; sequence PLSDRIGRK. The helical transmembrane segment at 79-99 threads the bilayer; sequence PVLITGALIFTLACAATMFTT. At 100-103 the chain is on the periplasmic side; that stretch reads SMTQ. Residues 104–124 traverse the membrane as a helical segment; it reads FLIARAIQGTSICFIATVGYV. Residues 125 to 140 are Cytoplasmic-facing; that stretch reads TVQEAFGQTKGIKLMA. A helical membrane pass occupies residues 141 to 161; it reads IITSIVLIAPIIGPLSGAALM. Residues 162 to 167 lie on the Periplasmic side of the membrane; that stretch reads HFVHWK. The chain crosses the membrane as a helical span at residues 168 to 188; sequence VLFAIIAVMGFISFVGLLLAM. Topologically, residues 189 to 216 are cytoplasmic; it reads PETVKRGAVPFSAKSVLRDFRNVFCNRL. A helical membrane pass occupies residues 217-237; sequence FLFGAATISLSYIPMMSWVAV. The Periplasmic segment spans residues 238 to 251; the sequence is SPVILIDAGGLTTS. Residues 252–272 form a helical membrane-spanning segment; sequence QFAWTQVPVFGAVIVANAIVA. At 273-282 the chain is on the cytoplasmic side; the sequence is RFVKDPTEPR. Residues 283 to 303 traverse the membrane as a helical segment; it reads FIWRAVPIQLVGLALLIIGNL. Residues 304-307 are Periplasmic-facing; it reads LSPH. Residues 308–328 traverse the membrane as a helical segment; that stretch reads VWLWSVLGTSLYAFGIGLIFP. Topologically, residues 329 to 348 are cytoplasmic; that stretch reads TLFRFTLFSNNLPKGTVSAS. A helical transmembrane segment spans residues 349–369; that stretch reads LNMVILMVMSVSVEIGRWLWF. Residues 370–373 are Periplasmic-facing; the sequence is NGGR. Residues 374 to 394 traverse the membrane as a helical segment; that stretch reads LPFHLLAVVAGVIVVFTLAGL. At 395–410 the chain is on the cytoplasmic side; the sequence is LNRVRQHQAAELAEEQ.

This sequence belongs to the major facilitator superfamily.

Its subcellular location is the cell inner membrane. Its function is as follows. Proton-dependent efflux pump. Confers resistance to a broad spectrum of chemically unrelated substrates. The sequence is that of Multidrug resistance protein MdtM (mdtM) from Escherichia coli O157:H7.